The chain runs to 188 residues: Elongation factor P (188 aa).

Lysine 34 carries the N6-(3,6-diaminohexanoyl)-5-hydroxylysine modification.

The protein belongs to the elongation factor P family. May be beta-lysylated on the epsilon-amino group of Lys-34 by the combined action of EpmA and EpmB, and then hydroxylated on the C5 position of the same residue by EpmC (if this protein is present). Lysylation is critical for the stimulatory effect of EF-P on peptide-bond formation. The lysylation moiety may extend toward the peptidyltransferase center and stabilize the terminal 3-CCA end of the tRNA. Hydroxylation of the C5 position on Lys-34 may allow additional potential stabilizing hydrogen-bond interactions with the P-tRNA.

It is found in the cytoplasm. It functions in the pathway protein biosynthesis; polypeptide chain elongation. In terms of biological role, involved in peptide bond synthesis. Alleviates ribosome stalling that occurs when 3 or more consecutive Pro residues or the sequence PPG is present in a protein, possibly by augmenting the peptidyl transferase activity of the ribosome. Modification of Lys-34 is required for alleviation. This Xanthomonas campestris pv. campestris (strain B100) protein is Elongation factor P.